The chain runs to 124 residues: Small ribosomal subunit protein uS12 (124 aa).

Asp-89 carries the 3-methylthioaspartic acid modification.

It belongs to the universal ribosomal protein uS12 family. Part of the 30S ribosomal subunit. Contacts proteins S8 and S17. May interact with IF1 in the 30S initiation complex.

With S4 and S5 plays an important role in translational accuracy. Its function is as follows. Interacts with and stabilizes bases of the 16S rRNA that are involved in tRNA selection in the A site and with the mRNA backbone. Located at the interface of the 30S and 50S subunits, it traverses the body of the 30S subunit contacting proteins on the other side and probably holding the rRNA structure together. The combined cluster of proteins S8, S12 and S17 appears to hold together the shoulder and platform of the 30S subunit. The sequence is that of Small ribosomal subunit protein uS12 from Vibrio vulnificus (strain CMCP6).